Reading from the N-terminus, the 146-residue chain is Hemoglobin subunit beta (146 aa).

Valine 1 is subject to N-acetylvaline. Positions 2-146 (HLTAEEKDAV…VANALAHRYH (145 aa)) constitute a Globin domain. Serine 44 carries the post-translational modification Phosphoserine. At lysine 59 the chain carries N6-acetyllysine. Histidine 63 lines the heme b pocket. Lysine 82 is modified (N6-acetyllysine). Histidine 92 lines the heme b pocket. Cysteine 93 carries the S-nitrosocysteine modification.

This sequence belongs to the globin family. In terms of assembly, heterotetramer of two alpha chains and two beta chains. Red blood cells.

Its function is as follows. Involved in oxygen transport from the lung to the various peripheral tissues. The polypeptide is Hemoglobin subunit beta (HBB) (Hippopotamus amphibius (Hippopotamus)).